The primary structure comprises 77 residues: RNA-binding protein Hfq (77 aa).

One can recognise a Sm domain in the interval Asp10 to Ile70.

This sequence belongs to the Hfq family. Homohexamer.

Its function is as follows. RNA chaperone that binds small regulatory RNA (sRNAs) and mRNAs to facilitate mRNA translational regulation in response to envelope stress, environmental stress and changes in metabolite concentrations. Also binds with high specificity to tRNAs. This Cereibacter sphaeroides (strain ATCC 17029 / ATH 2.4.9) (Rhodobacter sphaeroides) protein is RNA-binding protein Hfq.